The primary structure comprises 245 residues: Octanoyltransferase (245 aa).

In terms of domain architecture, BPL/LPL catalytic spans 54–242 (QNAHEQVWLL…SFEQIFGPII (189 aa)). Residues 93–100 (RGGEFTYH), 173–175 (AIG), and 186–188 (GVS) contribute to the substrate site. C204 functions as the Acyl-thioester intermediate in the catalytic mechanism.

This sequence belongs to the LipB family.

Its subcellular location is the cytoplasm. The catalysed reaction is octanoyl-[ACP] + L-lysyl-[protein] = N(6)-octanoyl-L-lysyl-[protein] + holo-[ACP] + H(+). It functions in the pathway protein modification; protein lipoylation via endogenous pathway; protein N(6)-(lipoyl)lysine from octanoyl-[acyl-carrier-protein]: step 1/2. Catalyzes the transfer of endogenously produced octanoic acid from octanoyl-acyl-carrier-protein onto the lipoyl domains of lipoate-dependent enzymes. Lipoyl-ACP can also act as a substrate although octanoyl-ACP is likely to be the physiological substrate. In Bartonella henselae (strain ATCC 49882 / DSM 28221 / CCUG 30454 / Houston 1) (Rochalimaea henselae), this protein is Octanoyltransferase.